The chain runs to 275 residues: Ceramide synthase (275 aa).

One can recognise a TLC domain in the interval 34–261; it reads ADAVIVSARL…ICRGACRLFR (228 aa). 4 consecutive transmembrane segments (helical) span residues 130-150, 159-179, 194-214, and 232-252; these read FLMV…SVVW, LGCM…KILI, ALML…LYWA, and AHVN…FFLI.

As to expression, each isoform has a distinct expression pattern. Isoform 1 is highly expressed in brain. Isoform 2 is expressed at low levels, if any, in all analyzed tissues, with slightly higher levels in testis. Isoform 3 is expressed at very high levels in testis and, at lower levels, in white adipose tissue. In epididymal fat, isoform 3 is expressed at higher levels in obese mice compared with lean mice. By contrast, isoform 1 and 2 levels are significantly lower in obese mice compared with lean mice.

The protein resides in the golgi apparatus membrane. It is found in the endoplasmic reticulum membrane. The enzyme catalyses sphing-4-enine + octadecanoyl-CoA = N-octadecanoylsphing-4-enine + CoA + H(+). The catalysed reaction is eicosanoyl-CoA + sphing-4-enine = N-eicosanoyl-sphing-4-enine + CoA + H(+). It carries out the reaction sphing-4-enine + hexadecanoyl-CoA = N-hexadecanoylsphing-4-enine + CoA + H(+). In terms of biological role, involved in ceramide synthesis. In vitro, isoform 3 stimulates the production of C16-, C18- and C20-ceramides, isoform 1 slightly increases the levels of C18- and C20-ceramides, while isoform 2 exhibits only minimal activity. May interfere with adipogenesis by stimulating ceramide synthesis. This chain is Ceramide synthase (Tlcd3b), found in Mus musculus (Mouse).